Reading from the N-terminus, the 282-residue chain is Bicarbonate transport ATP-binding protein CmpD (282 aa).

The ABC transporter domain occupies 24–257; that stretch reads LTIENVSKVY…RPRDRDRIME (234 aa). Position 60-67 (60-67) interacts with ATP; sequence GHSGCGKS.

This sequence belongs to the ABC transporter superfamily. Nitrate/nitrite/cyanate uptake transporter (NitT) (TC 3.A.1.16) family. In terms of assembly, the complex is composed of two ATP-binding proteins (CmpC and CmpD), a transmembrane protein (CmpB) and a solute-binding protein (CmpA).

The protein resides in the cell inner membrane. In terms of biological role, part of the ABC transporter complex CmpABCD involved in bicarbonate transport. Responsible for energy coupling to the transport system. The protein is Bicarbonate transport ATP-binding protein CmpD (cmpD) of Synechocystis sp. (strain ATCC 27184 / PCC 6803 / Kazusa).